The chain runs to 310 residues: Acetyl-coenzyme A carboxylase carboxyl transferase subunit beta (310 aa).

The 270-residue stretch at 27-296 (LWKKCPKCSA…PEFENEEELE (270 aa)) folds into the CoA carboxyltransferase N-terminal domain. Positions 31, 34, 50, and 53 each coordinate Zn(2+). The segment at 31–53 (CPKCSAVLYRPELEKNLDVCPKC) adopts a C4-type zinc-finger fold. The interval 285–310 (PEPEFENEEELEEEEMERPEPPDNVE) is disordered. Over residues 287-310 (PEFENEEELEEEEMERPEPPDNVE) the composition is skewed to acidic residues.

The protein belongs to the AccD/PCCB family. As to quaternary structure, acetyl-CoA carboxylase is a heterohexamer composed of biotin carboxyl carrier protein (AccB), biotin carboxylase (AccC) and two subunits each of ACCase subunit alpha (AccA) and ACCase subunit beta (AccD). It depends on Zn(2+) as a cofactor.

Its subcellular location is the cytoplasm. The enzyme catalyses N(6)-carboxybiotinyl-L-lysyl-[protein] + acetyl-CoA = N(6)-biotinyl-L-lysyl-[protein] + malonyl-CoA. Its pathway is lipid metabolism; malonyl-CoA biosynthesis; malonyl-CoA from acetyl-CoA: step 1/1. Its function is as follows. Component of the acetyl coenzyme A carboxylase (ACC) complex. Biotin carboxylase (BC) catalyzes the carboxylation of biotin on its carrier protein (BCCP) and then the CO(2) group is transferred by the transcarboxylase to acetyl-CoA to form malonyl-CoA. This Hahella chejuensis (strain KCTC 2396) protein is Acetyl-coenzyme A carboxylase carboxyl transferase subunit beta.